A 290-amino-acid polypeptide reads, in one-letter code: Agglutinin-2 (290 aa).

An N-terminal signal peptide occupies residues methionine 1–serine 35. Asparagine 155 is a glycosylation site (N-linked (GlcNAc...) asparagine). Residues glutamate 165 and aspartate 167 each coordinate Mn(2+). Residues aspartate 167, asparagine 171, and aspartate 175 each contribute to the Ca(2+) site. Residues aspartate 175 and histidine 180 each coordinate Mn(2+). N-linked (GlcNAc...) asparagine glycosylation occurs at asparagine 200.

The protein belongs to the leguminous lectin family. As to quaternary structure, homotetramer.

Mannose/glucose binding bark lectin. Its function is as follows. Bark lectins are storage proteins that probably maintain stocks of nitrogen during dormant period. Self-aggregatable molecules that can bind their own carbohydrate side chains. They could also play a role in the plant's defense against phytophagous invertebrates or herbivorous higher animals. The chain is Agglutinin-2 from Cladrastis kentukea (Yellow wood).